A 550-amino-acid chain; its full sequence is Cyclopentanone 1,2-monooxygenase (550 aa).

FAD-binding positions include 31-32 (FT), D51, W60, D71, Y77, and V123.

The protein belongs to the FAD-binding monooxygenase family. Homotetramer. The cofactor is FAD.

The enzyme catalyses cyclopentanone + NADPH + O2 + H(+) = 5-valerolactone + NADP(+) + H2O. The protein operates within alcohol metabolism; cyclopentanol degradation; 5-valerolactone from cyclopentanol: step 2/2. Catalyzes a Baeyer-Villiger oxidation reaction, i.e. the insertion of an oxygen atom into a carbon-carbon bond adjacent to a carbonyl, which converts ketones to esters or lactones using NADPH as an electron donor. Converts cyclopentanone to 5-valerolactone, a step in the degradation pathway of cyclopentanol. Besides cycloalkanones, can also act on methylated and other alkylated cycloalkanones, and on methylated cycloalkenones, with high enantioselectivity in some cases. Cannot use NADH instead of NADPH. The chain is Cyclopentanone 1,2-monooxygenase (cpnB) from Comamonas sp. (strain NCIMB 9872).